The primary structure comprises 345 residues: Aspartate--ammonia ligase (345 aa).

The protein belongs to the class-II aminoacyl-tRNA synthetase family. AsnA subfamily.

The protein localises to the cytoplasm. It carries out the reaction L-aspartate + NH4(+) + ATP = L-asparagine + AMP + diphosphate + H(+). Its pathway is amino-acid biosynthesis; L-asparagine biosynthesis; L-asparagine from L-aspartate (ammonia route): step 1/1. This chain is Aspartate--ammonia ligase, found in Bacteroides fragilis (strain ATCC 25285 / DSM 2151 / CCUG 4856 / JCM 11019 / LMG 10263 / NCTC 9343 / Onslow / VPI 2553 / EN-2).